Here is a 309-residue protein sequence, read N- to C-terminus: Ribosomal RNA large subunit methyltransferase F (309 aa).

Belongs to the methyltransferase superfamily. METTL16/RlmF family.

It is found in the cytoplasm. It catalyses the reaction adenosine(1618) in 23S rRNA + S-adenosyl-L-methionine = N(6)-methyladenosine(1618) in 23S rRNA + S-adenosyl-L-homocysteine + H(+). In terms of biological role, specifically methylates the adenine in position 1618 of 23S rRNA. In Cronobacter sakazakii (strain ATCC BAA-894) (Enterobacter sakazakii), this protein is Ribosomal RNA large subunit methyltransferase F.